Consider the following 325-residue polypeptide: Neural proliferation differentiation and control protein 1 (325 aa).

An N-terminal signal peptide occupies residues Met1–Ala34. Residues Gln138–Pro175 form a disordered region. A helical transmembrane segment spans residues Gly182 to Ala202. At Ser229 the chain carries Phosphoserine. The disordered stretch occupies residues Glu266 to Cys290. Over residues Ser275 to Asp284 the composition is skewed to acidic residues.

This sequence belongs to the NPDC1/cab-1 family. Strongly expressed in adult brain; especially in hippocampus, frontal lobe and temporal lobe.

The protein localises to the membrane. Suppresses oncogenic transformation in neural and non-neural cells and down-regulates neural cell proliferation. Might be involved in transcriptional regulation. The sequence is that of Neural proliferation differentiation and control protein 1 (NPDC1) from Homo sapiens (Human).